Reading from the N-terminus, the 72-residue chain is Large ribosomal subunit protein uL29 (72 aa).

It belongs to the universal ribosomal protein uL29 family.

This Prochlorococcus marinus (strain MIT 9215) protein is Large ribosomal subunit protein uL29.